We begin with the raw amino-acid sequence, 220 residues long: Protein GrpE (220 aa).

Belongs to the GrpE family. As to quaternary structure, homodimer.

The protein resides in the cytoplasm. Functionally, participates actively in the response to hyperosmotic and heat shock by preventing the aggregation of stress-denatured proteins, in association with DnaK and GrpE. It is the nucleotide exchange factor for DnaK and may function as a thermosensor. Unfolded proteins bind initially to DnaJ; upon interaction with the DnaJ-bound protein, DnaK hydrolyzes its bound ATP, resulting in the formation of a stable complex. GrpE releases ADP from DnaK; ATP binding to DnaK triggers the release of the substrate protein, thus completing the reaction cycle. Several rounds of ATP-dependent interactions between DnaJ, DnaK and GrpE are required for fully efficient folding. In Bartonella quintana (strain Toulouse) (Rochalimaea quintana), this protein is Protein GrpE.